The sequence spans 142 residues: Large ribosomal subunit protein uL11 (142 aa).

Belongs to the universal ribosomal protein uL11 family. In terms of assembly, part of the ribosomal stalk of the 50S ribosomal subunit. Interacts with L10 and the large rRNA to form the base of the stalk. L10 forms an elongated spine to which L12 dimers bind in a sequential fashion forming a multimeric L10(L12)X complex. One or more lysine residues are methylated.

In terms of biological role, forms part of the ribosomal stalk which helps the ribosome interact with GTP-bound translation factors. The sequence is that of Large ribosomal subunit protein uL11 from Brucella anthropi (strain ATCC 49188 / DSM 6882 / CCUG 24695 / JCM 21032 / LMG 3331 / NBRC 15819 / NCTC 12168 / Alc 37) (Ochrobactrum anthropi).